The primary structure comprises 545 residues: Chaperonin GroEL 3 (545 aa).

Residues 30–33, Lys51, 87–91, Gly415, and Asp496 contribute to the ATP site; these read TLGP and DGTTT.

This sequence belongs to the chaperonin (HSP60) family. In terms of assembly, forms a cylinder of 14 subunits composed of two heptameric rings stacked back-to-back. Interacts with the co-chaperonin GroES.

It localises to the cytoplasm. The catalysed reaction is ATP + H2O + a folded polypeptide = ADP + phosphate + an unfolded polypeptide.. In terms of biological role, together with its co-chaperonin GroES, plays an essential role in assisting protein folding. The GroEL-GroES system forms a nano-cage that allows encapsulation of the non-native substrate proteins and provides a physical environment optimized to promote and accelerate protein folding. In Nitrobacter hamburgensis (strain DSM 10229 / NCIMB 13809 / X14), this protein is Chaperonin GroEL 3.